A 374-amino-acid polypeptide reads, in one-letter code: MATEISPTIIPIVMPKWGLSMKEGTVNAWLVDEGTEITVGLPILDVETDKIANAVEAPDAGTLRRKVAQAGDVLPVKALLGVLAPAEVSDAQIDDYVAAYETPADDAGEEDAAAAYQFADVDGIRVRYARKGGGAETVLFIHGFGGDLDNWLFNLDPLADAYTVVALDLPGHGQSSPRLAGTTLAQMAGFVARFMDETGIEAAHVVGHSMGGGVAAQLAVDAPQRVLSVALVSPVGFGDAVNSGYTEGFVSAQSRRELKPVVELLFADAGLVSRQMLDDLLRYKRLDGVTEALTALGQGLFGGGRQSEQPGQRLANSGKRVLVVWGGQDQIIPAAHAEAAPPGATVKVFADAGHMSQMEKANDFNALLKKHLGG.

A Lipoyl-binding domain is found at Ile9–Ala84. Lys50 bears the N6-lipoyllysine mark. The AB hydrolase-1 domain occupies Thr137 to Lys360.

(R)-lipoate is required as a cofactor.

It catalyses the reaction N(6)-[(R)-dihydrolipoyl]-L-lysyl-[protein] + acetyl-CoA = N(6)-[(R)-S(8)-acetyldihydrolipoyl]-L-lysyl-[protein] + CoA. It participates in ketone degradation; acetoin degradation. In terms of biological role, dihydrolipoamide acetyltransferase involved in acetoin catabolism. This chain is Dihydrolipoyllysine-residue acetyltransferase component of acetoin cleaving system (acoC), found in Cupriavidus necator (strain ATCC 17699 / DSM 428 / KCTC 22496 / NCIMB 10442 / H16 / Stanier 337) (Ralstonia eutropha).